Here is a 391-residue protein sequence, read N- to C-terminus: Heme A synthase (391 aa).

The next 8 membrane-spanning stretches (helical) occupy residues 37-57, 121-141, 152-172, 186-206, 229-249, 298-318, 332-352, and 354-374; these read IRLW…VGGL, RQLG…FLAA, LLAL…MVAS, LATH…QALL, TTVL…VAGI, FLHR…WIFG, LLAM…LSAA, and WQVA…ILHA. A heme-binding site is contributed by His300. Position 360 (His360) interacts with heme.

The protein belongs to the COX15/CtaA family. Type 2 subfamily. Interacts with CtaB. It depends on heme b as a cofactor.

It localises to the cell membrane. It catalyses the reaction Fe(II)-heme o + 2 A + H2O = Fe(II)-heme a + 2 AH2. It functions in the pathway porphyrin-containing compound metabolism; heme A biosynthesis; heme A from heme O: step 1/1. Catalyzes the conversion of heme O to heme A by two successive hydroxylations of the methyl group at C8. The first hydroxylation forms heme I, the second hydroxylation results in an unstable dihydroxymethyl group, which spontaneously dehydrates, resulting in the formyl group of heme A. The chain is Heme A synthase from Cereibacter sphaeroides (strain KD131 / KCTC 12085) (Rhodobacter sphaeroides).